The sequence spans 317 residues: Melanocyte-stimulating hormone receptor (317 aa).

At 1–37 (MPVQGSQRRLLGSLNSTPTATPRLGLAANQTGARCLE) the chain is on the extracellular side. The N-linked (GlcNAc...) asparagine glycan is linked to asparagine 29. A helical membrane pass occupies residues 38 to 63 (VSIPDGLFLSLGLVSLVENVLVVVAI). Residues 64–72 (ARNRNLHSP) are Cytoplasmic-facing. A helical transmembrane segment spans residues 73–93 (MYCFICCLALSDLLVSGSNML). The Extracellular portion of the chain corresponds to 94–118 (DTAVILLLEAGALAARAAVVQQLDN). A helical membrane pass occupies residues 119 to 140 (VIDVITCSSMLSSLCFLGAIAV). The Cytoplasmic segment spans residues 141 to 163 (DRYISIFYALRYHSIVTLRRARR). The chain crosses the membrane as a helical span at residues 164-183 (VVAAIWVASILFSTLFIAYC). The Extracellular segment spans residues 184–191 (DHAAVLLC). The helical transmembrane segment at 192–211 (LVVFFLAMLVLMAVLYVHML) threads the bilayer. The Cytoplasmic segment spans residues 212 to 240 (ARACQHAQGIAQLHKRQRPAHQGVGLKGA). A helical membrane pass occupies residues 241–266 (ATLTILLGIFFLCWGPFFLHLTLIVL). Over 267 to 279 (CPQHPTCSCIFKN) the chain is Extracellular. Residues 280–300 (FNLFLTLIICNAIIDPLIYAF) traverse the membrane as a helical segment. Over 301–317 (RSQELRRTLKKVLLCSW) the chain is Cytoplasmic. Cysteine 315 carries S-palmitoyl cysteine lipidation.

This sequence belongs to the G-protein coupled receptor 1 family. In terms of assembly, interacts with MGRN1, but does not undergo MGRN1-mediated ubiquitination; this interaction competes with GNAS-binding and thus inhibits agonist-induced cAMP production. Interacts with OPN3; the interaction results in a decrease in MC1R-mediated cAMP signaling and ultimately a decrease in melanin production in melanocytes.

The protein resides in the cell membrane. Functionally, receptor for MSH (alpha, beta and gamma) and ACTH. The activity of this receptor is mediated by G proteins which activate adenylate cyclase. Mediates melanogenesis, the production of eumelanin (black/brown) and phaeomelanin (red/yellow), via regulation of cAMP signaling in melanocytes. This Trachypithecus francoisi (Francois' leaf monkey) protein is Melanocyte-stimulating hormone receptor (MC1R).